A 202-amino-acid polypeptide reads, in one-letter code: CASP-like protein 1U4 (202 aa).

The Cytoplasmic segment spans residues 1–10 (MCLPAKWLHP). A helical membrane pass occupies residues 11–31 (VSLIFRVAGIGLAAVSAAAML). Topologically, residues 32–56 (TASQCTVYADYGWRPRTVTYSDFPA) are extracellular. Residues 57–77 (FVYLVAATAIATLLEAVALFL) traverse the membrane as a helical segment. Residues 78–94 (SWSKKGKSKKSWRVLTM) lie on the Cytoplasmic side of the membrane. A helical membrane pass occupies residues 95–115 (LLLGAVVPALLYTSAGAAFAV). Residues 116–146 (GWEDIYYYLEPIGRRFSVCRSSVAGGRFCEH) lie on the Extracellular side of the membrane. A helical transmembrane segment spans residues 147 to 167 (VHVSMWLALGAAVAVSFAEFL). Topologically, residues 168–202 (TTFRWCHGSGSCSDSDSDSDSDSESGCGHGCHCKH) are cytoplasmic.

It belongs to the Casparian strip membrane proteins (CASP) family. In terms of assembly, homodimer and heterodimers.

The protein resides in the cell membrane. This is CASP-like protein 1U4 from Sorghum bicolor (Sorghum).